The sequence spans 267 residues: Taurine import ATP-binding protein TauB (267 aa).

The region spanning 6–238 (FNEASLIYPA…DILAGAPASE (233 aa)) is the ABC transporter domain. 43–50 (GRSGSGKT) contributes to the ATP binding site.

This sequence belongs to the ABC transporter superfamily. Taurine importer (TC 3.A.1.17.1) family. As to quaternary structure, the complex is composed of two ATP-binding proteins (TauB), two transmembrane proteins (TauC) and a solute-binding protein (TauA).

Its subcellular location is the cell inner membrane. It catalyses the reaction taurine(out) + ATP + H2O = taurine(in) + ADP + phosphate + H(+). Its function is as follows. Part of the ABC transporter complex TauABC involved in taurine import. Responsible for energy coupling to the transport system. This is Taurine import ATP-binding protein TauB from Sinorhizobium fredii (strain NBRC 101917 / NGR234).